Consider the following 143-residue polypeptide: Large ribosomal subunit protein uL15 (143 aa).

The interval 1–54 is disordered; it reads MELNSIKPAEGAKHAKRRVGRGIGSGLGKTAGRGHKGQKSRSGGYHKVGFEGGQ. Gly residues predominate over residues 21-31; it reads RGIGSGLGKTA.

This sequence belongs to the universal ribosomal protein uL15 family. As to quaternary structure, part of the 50S ribosomal subunit.

In terms of biological role, binds to the 23S rRNA. The sequence is that of Large ribosomal subunit protein uL15 from Paracidovorax citrulli (strain AAC00-1) (Acidovorax citrulli).